A 671-amino-acid chain; its full sequence is Probable boron transporter 6 (671 aa).

Residues 1 to 37 are Cytoplasmic-facing; it reads MKSEGESGPFQGILRDIEGRRKCYKQDWIRGIKTGIR. Residues 38–58 form a helical membrane-spanning segment; it reads ILAPTCYIFFASSLPVVAFGE. Residues 59–77 lie on the Extracellular side of the membrane; sequence QLSKHTGGALSAVETLAST. Residues 78–98 traverse the membrane as a helical segment; the sequence is SICGIIHAIFGGQPLLIVGVA. Residues 99 to 123 are Cytoplasmic-facing; that stretch reads EPTIIMYTYLYSFCISRPDIGRELY. A helical transmembrane segment spans residues 124–144; the sequence is LAWVAWVCVWTSVLLILLSIF. The Extracellular segment spans residues 145-157; the sequence is NAGTIITRFTRIA. Residues 158 to 178 form a helical membrane-spanning segment; it reads GELFGMLIAVLFLQEAIKGLI. The Cytoplasmic portion of the chain corresponds to 179 to 195; it reads SEFHAPEIKNQETGKSH. A helical membrane pass occupies residues 196–216; that stretch reads FLLIYANGLLAVIFSLGLLIT. Residues 217-235 are Extracellular-facing; that stretch reads ALKSRRAKSWKYGFGWLRS. A helical transmembrane segment spans residues 236–256; the sequence is FIGDYGVPLMVLLWTALSYTV. Residues 257 to 291 are Cytoplasmic-facing; that stretch reads PSEVLPSVPRRLFCPLPWEPASLYHWTVVKDMGKV. A helical membrane pass occupies residues 292 to 312; it reads PIMYILAAFIPGVMIAGLYFF. At 313–332 the chain is on the extracellular side; it reads DHSVASQMAQQKEFNLKNPS. A helical transmembrane segment spans residues 333 to 353; that stretch reads AYHYDIFLLGIITLICGLLGL. Over 354 to 469 the chain is Cytoplasmic; the sequence is PPSNGVLPQA…EQRVSNLLQS (116 aa). The helical transmembrane segment at 470–490 threads the bilayer; it reads VLVGLTLLAVTVIKMIPSSVL. The Extracellular segment spans residues 491 to 557; the sequence is WGYFAYMAID…QLVYFLLCYG (67 aa). Residues 558-578 form a helical membrane-spanning segment; sequence MTWIPMAGIFFPALFFLLISI. At 579 to 671 the chain is on the cytoplasmic side; the sequence is REHLLPKLFD…EEKHVTFEPH (93 aa).

Belongs to the anion exchanger (TC 2.A.31.3) family.

It is found in the membrane. Its function is as follows. Probable boron transporter. Boron is essential for maintaining the integrity of plants cell walls. The sequence is that of Probable boron transporter 6 (BOR6) from Arabidopsis thaliana (Mouse-ear cress).